Here is a 288-residue protein sequence, read N- to C-terminus: Polyamine aminopropyltransferase (288 aa).

A PABS domain is found at 9–238; sequence ETLHDQFGQY…GIMTFAWATD (230 aa). Gln33 contributes to the S-methyl-5'-thioadenosine binding site. Spermidine is bound by residues His64 and Asp88. Residues Glu108 and 140–141 contribute to the S-methyl-5'-thioadenosine site; that span reads DG. Asp158 serves as the catalytic Proton acceptor. Residue 158-161 participates in spermidine binding; sequence DCTD. An S-methyl-5'-thioadenosine-binding site is contributed by Pro165.

The protein belongs to the spermidine/spermine synthase family. Homodimer or homotetramer.

It is found in the cytoplasm. The catalysed reaction is S-adenosyl 3-(methylsulfanyl)propylamine + putrescine = S-methyl-5'-thioadenosine + spermidine + H(+). Its pathway is amine and polyamine biosynthesis; spermidine biosynthesis; spermidine from putrescine: step 1/1. In terms of biological role, catalyzes the irreversible transfer of a propylamine group from the amino donor S-adenosylmethioninamine (decarboxy-AdoMet) to putrescine (1,4-diaminobutane) to yield spermidine. This Shigella flexneri serotype 5b (strain 8401) protein is Polyamine aminopropyltransferase.